A 351-amino-acid chain; its full sequence is Protein RecA (351 aa).

An ATP-binding site is contributed by 64 to 71 (GPESSGKT). Residues 330-351 (DRFLQNGGPDPDDGDGDATAEM) are disordered. Positions 339-351 (DPDDGDGDATAEM) are enriched in acidic residues.

It belongs to the RecA family.

The protein resides in the cytoplasm. Can catalyze the hydrolysis of ATP in the presence of single-stranded DNA, the ATP-dependent uptake of single-stranded DNA by duplex DNA, and the ATP-dependent hybridization of homologous single-stranded DNAs. It interacts with LexA causing its activation and leading to its autocatalytic cleavage. This Rhizobium leguminosarum bv. viciae protein is Protein RecA.